A 66-amino-acid chain; its full sequence is Surface composition regulator (66 aa).

The protein belongs to the GlgS family.

Functionally, major determinant of cell surface composition. Negatively regulates motility, adhesion and synthesis of biofilm exopolysaccharides. The protein is Surface composition regulator of Shigella dysenteriae serotype 1 (strain Sd197).